Reading from the N-terminus, the 352-residue chain is Alanine racemase (352 aa).

The active-site Proton acceptor; specific for D-alanine is the Lys-33. Lys-33 is modified (N6-(pyridoxal phosphate)lysine). Arg-129 is a substrate binding site. Tyr-250 functions as the Proton acceptor; specific for L-alanine in the catalytic mechanism. Residue Met-298 coordinates substrate.

This sequence belongs to the alanine racemase family. It depends on pyridoxal 5'-phosphate as a cofactor.

It catalyses the reaction L-alanine = D-alanine. The protein operates within amino-acid biosynthesis; D-alanine biosynthesis; D-alanine from L-alanine: step 1/1. Catalyzes the interconversion of L-alanine and D-alanine. May also act on other amino acids. The sequence is that of Alanine racemase (alr) from Neisseria meningitidis serogroup B (strain ATCC BAA-335 / MC58).